The following is a 313-amino-acid chain: 2-dehydro-3-deoxygluconokinase/2-dehydro-3-deoxygalactonokinase (313 aa).

Residues 34-38 (GSELN), Tyr90, 106-108 (YYR), and Arg166 contribute to the substrate site. ATP-binding positions include 164 to 166 (NIR), 226 to 231 (KLGSKG), and 255 to 258 (GAGD). Residues Asp258 and Asp294 each contribute to the substrate site. Asp258 (proton acceptor) is an active-site residue.

As to quaternary structure, homohexamer; trimer of dimers.

It catalyses the reaction 2-dehydro-3-deoxy-D-gluconate + ATP = 2-dehydro-3-deoxy-6-phospho-D-gluconate + ADP + H(+). It carries out the reaction 2-dehydro-3-deoxy-D-galactonate + ATP = 2-dehydro-3-deoxy-6-phospho-D-galactonate + ADP + H(+). It participates in carbohydrate acid metabolism; 2-dehydro-3-deoxy-D-gluconate degradation; D-glyceraldehyde 3-phosphate and pyruvate from 2-dehydro-3-deoxy-D-gluconate: step 1/2. Involved in the degradation of glucose and galactose via the semi-phosphorylative Entner-Doudoroff pathway. Catalyzes the phosphorylation of 2-keto-3-deoxygluconate (KDG) and 2-keto-3-deoxygalactonate (KDGal) to produce 2-keto-3-deoxy-6-phosphogluconate (KDPG) and 2-keto-3-deoxy-6-phosphogalactonate (KDPGal), respectively. This chain is 2-dehydro-3-deoxygluconokinase/2-dehydro-3-deoxygalactonokinase (kdgK), found in Saccharolobus solfataricus (strain ATCC 35092 / DSM 1617 / JCM 11322 / P2) (Sulfolobus solfataricus).